Consider the following 147-residue polypeptide: Large ribosomal subunit protein uL13 (147 aa).

Belongs to the universal ribosomal protein uL13 family. In terms of assembly, part of the 50S ribosomal subunit.

Its function is as follows. This protein is one of the early assembly proteins of the 50S ribosomal subunit, although it is not seen to bind rRNA by itself. It is important during the early stages of 50S assembly. The chain is Large ribosomal subunit protein uL13 from Latilactobacillus sakei subsp. sakei (strain 23K) (Lactobacillus sakei subsp. sakei).